Here is an 867-residue protein sequence, read N- to C-terminus: Mitochondrial 15S rRNA processing factor CCM1 (867 aa).

A mitochondrion-targeting transit peptide spans 1-96 (MLRYTRNYRL…KNLKAQIKRS (96 aa)). 2 PPR repeats span residues 337–371 (NRIN…SKEH) and 374–408 (DLIA…GINP).

It belongs to the CCM1 family. As to quaternary structure, binds to mitochondrial small subunit 15S rRNA.

The protein resides in the mitochondrion. Regulates mitochondrial small subunit maturation by controlling 15S rRNA 5'-end processing. Localizes to the 5' precursor of the 15S rRNA in a position that is subsequently occupied by mS47 in the mature yeast mtSSU. Uses structure and sequence-specific RNA recognition, binding to a single-stranded region of the precursor and specifically recognizing bases -6 to -1. The exchange of Ccm1 for mS47 is coupled to the irreversible removal of precursor rRNA that is accompanied by conformational changes of the mitoribosomal proteins uS5m and mS26. These conformational changes signal completion of 5'-end rRNA processing through protection of the mature 5'-end of the 15S rRNA and stabilization of mS47. The removal of the 5' precursor together with the dissociation of Ccm1 may be catalyzed by the 5'-3' exoribonuclease Pet127. Involved in the specific removal of group I introns in mitochondrial encoded transcripts. The protein is Mitochondrial 15S rRNA processing factor CCM1 (CCM1) of Vanderwaltozyma polyspora (strain ATCC 22028 / DSM 70294 / BCRC 21397 / CBS 2163 / NBRC 10782 / NRRL Y-8283 / UCD 57-17) (Kluyveromyces polysporus).